The following is a 104-amino-acid chain: ATP-dependent Clp protease adapter protein ClpS (104 aa).

Belongs to the ClpS family. Binds to the N-terminal domain of the chaperone ClpA.

Functionally, involved in the modulation of the specificity of the ClpAP-mediated ATP-dependent protein degradation. The polypeptide is ATP-dependent Clp protease adapter protein ClpS (Paraburkholderia phymatum (strain DSM 17167 / CIP 108236 / LMG 21445 / STM815) (Burkholderia phymatum)).